Reading from the N-terminus, the 914-residue chain is Inter-alpha-trypsin inhibitor heavy chain H1 (914 aa).

The first 30 residues, 1-30, serve as a signal peptide directing secretion; that stretch reads MDGAAVGLRVLLGLGLVSLLTLEAMPAAWG. The propeptide occupies 31–36; the sequence is LATTGR. A VIT domain is found at 39 to 168; sequence AREKRQAVDT…KATFQLTYEE (130 aa). Cysteine 62 carries S-linked (Hex...) cysteine glycosylation. Position 131 is a phosphoserine (serine 131). Asparagine 288 and asparagine 291 each carry an N-linked (GlcNAc...) asparagine glycan. The region spanning 293–453 is the VWFA domain; sequence SKNLVFVIDI…FNFLEVMSME (161 aa). 2 positions are modified to phosphothreonine: threonine 405 and threonine 410. Residue asparagine 591 is glycosylated (N-linked (GlcNAc...) asparagine). Threonine 656 carries O-linked (GalNAc...) threonine glycosylation. Aspartate 675 bears the Aspartate 1-(chondroitin 4-sulfate)-ester mark. Positions 676–914 are excised as a propeptide; the sequence is PHFIIYVPQK…HTDYIVPDIF (239 aa).

Belongs to the ITIH family. As to quaternary structure, I-alpha-I plasma protease inhibitors are assembled from one or two heavy chains (HC) and one light chain, bikunin. Inter-alpha-inhibitor (I-alpha-I) is composed of ITIH1/HC1, ITIH2/HC2 and bikunin. Interacts with TNFAIP6 (via Link and CUB domains). In terms of processing, heavy chains are linked to bikunin via chondroitin 4-sulfate esterified to the alpha-carboxyl of the C-terminal aspartate after propeptide cleavage. The S-linked glycan is composed of two 6-carbon sugars, possibly Glc or Gal.

The protein resides in the secreted. In terms of biological role, may act as a carrier of hyaluronan in serum or as a binding protein between hyaluronan and other matrix protein, including those on cell surfaces in tissues to regulate the localization, synthesis and degradation of hyaluronan which are essential to cells undergoing biological processes. The protein is Inter-alpha-trypsin inhibitor heavy chain H1 (ITIH1) of Mesocricetus auratus (Golden hamster).